A 208-amino-acid chain; its full sequence is Small ribosomal subunit protein uS4 (208 aa).

Positions 98 to 159 (RRLDNVAYRL…KSRKVAAISE (62 aa)) constitute an S4 RNA-binding domain.

Belongs to the universal ribosomal protein uS4 family. As to quaternary structure, part of the 30S ribosomal subunit. Contacts protein S5. The interaction surface between S4 and S5 is involved in control of translational fidelity.

Functionally, one of the primary rRNA binding proteins, it binds directly to 16S rRNA where it nucleates assembly of the body of the 30S subunit. In terms of biological role, with S5 and S12 plays an important role in translational accuracy. This Citrifermentans bemidjiense (strain ATCC BAA-1014 / DSM 16622 / JCM 12645 / Bem) (Geobacter bemidjiensis) protein is Small ribosomal subunit protein uS4.